A 125-amino-acid polypeptide reads, in one-letter code: MAPVKKQGGKKKKQILKFTLDCTHPVEDGIMDAANFEQFLQERIKVNGKSGNLGNGVVSIERXXSKISVNSEVPFSKRYLKYLTKKYLKKNNLRDWLRVVANTKESYELRYFQINQDEEEIHMTS.

It belongs to the eukaryotic ribosomal protein eL22 family. Component of the large ribosomal subunit.

The protein localises to the cytoplasm. Component of the large ribosomal subunit. The ribosome is a large ribonucleoprotein complex responsible for the synthesis of proteins in the cell. This chain is Large ribosomal subunit protein eL22 (rpl22), found in Gadus morhua (Atlantic cod).